The primary structure comprises 147 residues: Hemoglobin subunit epsilon (147 aa).

A Globin domain is found at 3-147 (HFTAEEKVAI…VAIALGHKYH (145 aa)). Phosphoserine is present on residues S14 and S51. The heme b site is built by H64 and H93.

Belongs to the globin family. Heterotetramer of two alpha chains and two epsilon chains in early embryonic hemoglobin Gower-2; two zeta chains and two epsilon chains in early embryonic hemoglobin Gower-1. As to expression, red blood cells.

Its function is as follows. The epsilon chain is a beta-type chain of early mammalian embryonic hemoglobin. This chain is Hemoglobin subunit epsilon (HBE1), found in Cebus kaapori (Ka'apor capuchin).